A 230-amino-acid polypeptide reads, in one-letter code: Ribosomal RNA small subunit methyltransferase G (230 aa).

S-adenosyl-L-methionine contacts are provided by residues glycine 74, phenylalanine 79, alanine 124–glutamate 125, and arginine 141.

Belongs to the methyltransferase superfamily. RNA methyltransferase RsmG family.

It localises to the cytoplasm. Its function is as follows. Specifically methylates the N7 position of a guanine in 16S rRNA. The sequence is that of Ribosomal RNA small subunit methyltransferase G from Acholeplasma laidlawii (strain PG-8A).